A 177-amino-acid polypeptide reads, in one-letter code: von Ebner gland protein 1 (177 aa).

The N-terminal stretch at 1–18 is a signal peptide; it reads MKALLLTFGLSLLAALQA. A disulfide bond links Cys-80 and Cys-172.

Belongs to the calycin superfamily. Lipocalin family. As to quaternary structure, homodimer.

The protein resides in the secreted. Functionally, could play a role in taste reception. Could be necessary for the concentration and delivery of sapid molecules in the gustatory system. This is von Ebner gland protein 1 (Vegp1) from Rattus norvegicus (Rat).